The primary structure comprises 355 residues: Isopentenyl-diphosphate delta-isomerase (355 aa).

9–10 (RK) serves as a coordination point for substrate. FMN is bound by residues 67 to 69 (AIT), Ser-97, and Asn-125. A substrate-binding site is contributed by 97–99 (SQR). Residue Gln-161 coordinates substrate. Glu-162 lines the Mg(2+) pocket. Residues Lys-197, Thr-227, 276 to 278 (GIR), and 297 to 298 (AL) contribute to the FMN site.

The protein belongs to the IPP isomerase type 2 family. As to quaternary structure, homooctamer. Dimer of tetramers. The cofactor is FMN. Requires NADPH as cofactor. Mg(2+) serves as cofactor.

It is found in the cytoplasm. The catalysed reaction is isopentenyl diphosphate = dimethylallyl diphosphate. Its function is as follows. Involved in the biosynthesis of isoprenoids. Catalyzes the 1,3-allylic rearrangement of the homoallylic substrate isopentenyl (IPP) to its allylic isomer, dimethylallyl diphosphate (DMAPP). The protein is Isopentenyl-diphosphate delta-isomerase of Methanococcus maripaludis (strain DSM 14266 / JCM 13030 / NBRC 101832 / S2 / LL).